Reading from the N-terminus, the 119-residue chain is Large ribosomal subunit protein bL20 (119 aa).

It belongs to the bacterial ribosomal protein bL20 family.

Binds directly to 23S ribosomal RNA and is necessary for the in vitro assembly process of the 50S ribosomal subunit. It is not involved in the protein synthesizing functions of that subunit. The polypeptide is Large ribosomal subunit protein bL20 (Rhodopseudomonas palustris (strain BisA53)).